The sequence spans 614 residues: DNA double-strand break repair protein Mre11 (614 aa).

Positions 12, 14, 53, and 88 each coordinate Mn(2+). The Proton donor role is filled by His-89. 3 residues coordinate Mn(2+): His-158, Asp-189, and His-191. 2 disordered regions span residues 393 to 434 (ASPI…SPDI) and 487 to 614 (ALKK…GDYL). Residues 411–425 (PVSSADSVSAVSPES) are compositionally biased toward low complexity. Composition is skewed to basic and acidic residues over residues 487–502 (ALKK…REAP), 535–558 (VPEK…KETG), and 568–591 (GSEK…EKPV).

It belongs to the MRE11/RAD32 family. In terms of assembly, homodimer. Forms a heterotetramer composed of two Mre11 subunits and two Rad50 subunits. Requires Mn(2+) as cofactor.

Nuclease activity is regulated by Rad50. Its function is as follows. Part of the Rad50/Mre11 complex, which is involved in the early steps of DNA double-strand break (DSB) repair. The complex may facilitate opening of the processed DNA ends to aid in the recruitment of HerA and NurA. Mre11 binds to DSB ends and has both double-stranded 3'-5' exonuclease activity and single-stranded endonuclease activity. This is DNA double-strand break repair protein Mre11 from Methanosarcina acetivorans (strain ATCC 35395 / DSM 2834 / JCM 12185 / C2A).